A 168-amino-acid polypeptide reads, in one-letter code: Cytochrome c-type biogenesis protein CcmE (168 aa).

At Met1 to Arg7 the chain is on the cytoplasmic side. A helical; Signal-anchor for type II membrane protein membrane pass occupies residues Leu8–Ala28. Residues Phe29–Pro168 lie on the Periplasmic side of the membrane. Heme contacts are provided by His122 and Tyr126. The segment at Ser149 to Pro168 is disordered.

The protein belongs to the CcmE/CycJ family.

Its subcellular location is the cell inner membrane. Heme chaperone required for the biogenesis of c-type cytochromes. Transiently binds heme delivered by CcmC and transfers the heme to apo-cytochromes in a process facilitated by CcmF and CcmH. The protein is Cytochrome c-type biogenesis protein CcmE of Rhodospirillum centenum (strain ATCC 51521 / SW).